Consider the following 231-residue polypeptide: Orotidine 5'-phosphate decarboxylase (231 aa).

Substrate-binding positions include D11, K33, 60–69 (DLKFHDIPNT), T120, R181, Q190, G210, and R211. Residue K62 is the Proton donor of the active site.

It belongs to the OMP decarboxylase family. Type 1 subfamily. In terms of assembly, homodimer.

It carries out the reaction orotidine 5'-phosphate + H(+) = UMP + CO2. It participates in pyrimidine metabolism; UMP biosynthesis via de novo pathway; UMP from orotate: step 2/2. Catalyzes the decarboxylation of orotidine 5'-monophosphate (OMP) to uridine 5'-monophosphate (UMP). The chain is Orotidine 5'-phosphate decarboxylase from Pseudoalteromonas atlantica (strain T6c / ATCC BAA-1087).